A 61-amino-acid chain; its full sequence is Alpha-conotoxine-like Am1.3 (61 aa).

The first 21 residues, 1 to 21, serve as a signal peptide directing secretion; the sequence is MGMRMMFTVFLLVVLATTVVS. Positions 22–44 are excised as a propeptide; sequence FMSGRASHGRNAAASDLIALTIK. At cysteine 60 the chain carries Cysteine amide.

Belongs to the conotoxin A superfamily. Is not hydroxylated. In terms of processing, contains 2 disulfide bonds. As to expression, expressed by the venom duct.

The protein resides in the secreted. Functionally, alpha-conotoxins act on postsynaptic membranes, they bind to the nicotinic acetylcholine receptors (nAChR) and thus inhibit them. The protein is Alpha-conotoxine-like Am1.3 of Conus amadis (Amadis cone).